The chain runs to 269 residues: Shikimate dehydrogenase (NADP(+)) (269 aa).

Shikimate-binding positions include 14–16 (SKS) and Thr61. The active-site Proton acceptor is the Lys65. Residue Glu77 participates in NADP(+) binding. Positions 86 and 102 each coordinate shikimate. NADP(+) contacts are provided by residues 126 to 130 (GAGGA), 149 to 154 (NRTLSK), and Met213. Tyr215 contacts shikimate. Gly238 is a binding site for NADP(+).

Belongs to the shikimate dehydrogenase family. Homodimer.

The enzyme catalyses shikimate + NADP(+) = 3-dehydroshikimate + NADPH + H(+). Its pathway is metabolic intermediate biosynthesis; chorismate biosynthesis; chorismate from D-erythrose 4-phosphate and phosphoenolpyruvate: step 4/7. Functionally, involved in the biosynthesis of the chorismate, which leads to the biosynthesis of aromatic amino acids. Catalyzes the reversible NADPH linked reduction of 3-dehydroshikimate (DHSA) to yield shikimate (SA). The chain is Shikimate dehydrogenase (NADP(+)) from Pasteurella multocida (strain Pm70).